Consider the following 205-residue polypeptide: Urease accessory protein UreE (205 aa).

The interval 171–205 (AHEAHPHAHSHAGGHGHVHSGHGHGGKHGEHDAES) is disordered. Residues 177–196 (HAHSHAGGHGHVHSGHGHGG) are compositionally biased toward basic residues.

It belongs to the UreE family.

It is found in the cytoplasm. In terms of biological role, involved in urease metallocenter assembly. Binds nickel. Probably functions as a nickel donor during metallocenter assembly. The sequence is that of Urease accessory protein UreE from Bordetella parapertussis (strain 12822 / ATCC BAA-587 / NCTC 13253).